We begin with the raw amino-acid sequence, 130 residues long: Small ribosomal subunit protein uS8 (130 aa).

Belongs to the universal ribosomal protein uS8 family. In terms of assembly, part of the 30S ribosomal subunit.

In terms of biological role, one of the primary rRNA binding proteins, it binds directly to 16S rRNA central domain where it helps coordinate assembly of the platform of the 30S subunit. In Methanopyrus kandleri (strain AV19 / DSM 6324 / JCM 9639 / NBRC 100938), this protein is Small ribosomal subunit protein uS8.